Consider the following 211-residue polypeptide: Thiamine-phosphate synthase (211 aa).

4-amino-2-methyl-5-(diphosphooxymethyl)pyrimidine contacts are provided by residues 37–41 (QLRIK) and Asn-69. Residues Asp-70 and Asp-89 each coordinate Mg(2+). Residue Ser-108 coordinates 4-amino-2-methyl-5-(diphosphooxymethyl)pyrimidine. 134–136 (TQT) lines the 2-[(2R,5Z)-2-carboxy-4-methylthiazol-5(2H)-ylidene]ethyl phosphate pocket. Residue Lys-137 participates in 4-amino-2-methyl-5-(diphosphooxymethyl)pyrimidine binding. Residues Gly-166 and 186 to 187 (VS) each bind 2-[(2R,5Z)-2-carboxy-4-methylthiazol-5(2H)-ylidene]ethyl phosphate.

This sequence belongs to the thiamine-phosphate synthase family. The cofactor is Mg(2+).

The catalysed reaction is 2-[(2R,5Z)-2-carboxy-4-methylthiazol-5(2H)-ylidene]ethyl phosphate + 4-amino-2-methyl-5-(diphosphooxymethyl)pyrimidine + 2 H(+) = thiamine phosphate + CO2 + diphosphate. It carries out the reaction 2-(2-carboxy-4-methylthiazol-5-yl)ethyl phosphate + 4-amino-2-methyl-5-(diphosphooxymethyl)pyrimidine + 2 H(+) = thiamine phosphate + CO2 + diphosphate. It catalyses the reaction 4-methyl-5-(2-phosphooxyethyl)-thiazole + 4-amino-2-methyl-5-(diphosphooxymethyl)pyrimidine + H(+) = thiamine phosphate + diphosphate. It participates in cofactor biosynthesis; thiamine diphosphate biosynthesis; thiamine phosphate from 4-amino-2-methyl-5-diphosphomethylpyrimidine and 4-methyl-5-(2-phosphoethyl)-thiazole: step 1/1. Condenses 4-methyl-5-(beta-hydroxyethyl)thiazole monophosphate (THZ-P) and 2-methyl-4-amino-5-hydroxymethyl pyrimidine pyrophosphate (HMP-PP) to form thiamine monophosphate (TMP). In Klebsiella pneumoniae subsp. pneumoniae (strain ATCC 700721 / MGH 78578), this protein is Thiamine-phosphate synthase.